Here is a 314-residue protein sequence, read N- to C-terminus: tRNA dimethylallyltransferase (314 aa).

9-16 contributes to the ATP binding site; the sequence is GPTAVGKT. Residue 11–16 coordinates substrate; that stretch reads TAVGKT. Residues 34-37 form an interaction with substrate tRNA region; it reads DSMQ.

Belongs to the IPP transferase family. In terms of assembly, monomer. Mg(2+) is required as a cofactor.

The catalysed reaction is adenosine(37) in tRNA + dimethylallyl diphosphate = N(6)-dimethylallyladenosine(37) in tRNA + diphosphate. Its function is as follows. Catalyzes the transfer of a dimethylallyl group onto the adenine at position 37 in tRNAs that read codons beginning with uridine, leading to the formation of N6-(dimethylallyl)adenosine (i(6)A). The sequence is that of tRNA dimethylallyltransferase from Clostridium tetani (strain Massachusetts / E88).